Consider the following 351-residue polypeptide: ABC transporter nucleoside-binding protein BmpA (351 aa).

Residues 1 to 21 (MKKRVIAVSAIALASVAVLAG) form the signal peptide. C22 carries N-palmitoyl cysteine lipidation. C22 carries S-diacylglycerol cysteine lipidation.

The protein belongs to the BMP lipoprotein family. In terms of assembly, the complex is composed of two ATP-binding proteins (NupA), two transmembrane proteins (NupB and NupC) and a solute-binding protein (BmpA).

It is found in the cell membrane. Its function is as follows. Part of an ABC transporter complex involved in the uptake of all common nucleosides. This is ABC transporter nucleoside-binding protein BmpA from Lactococcus lactis subsp. cremoris (strain MG1363).